The primary structure comprises 83 residues: Ardiscretin (83 aa).

The signal sequence occupies residues 1–20 (MKGMIMLISCLMLIDVVVES). An LCN-type CS-alpha/beta domain is found at 21–82 (KNGYIIEPKG…IFDYYNNKCG (62 aa)). 4 disulfides stabilise this stretch: Cys31/Cys81, Cys35/Cys57, Cys43/Cys62, and Cys47/Cys64. Cysteine amide is present on Cys81.

In terms of tissue distribution, expressed by the venom gland.

The protein localises to the secreted. In terms of biological role, inhibits the sodium (Nav) currents in an apparent irreversible manner. Produces small depolarization and induces repetitive firing in squid axons. Is specific for arthropods (crickets, triatomides, crabs and squids), but is non-toxic to mice. Shows antibacterial activity against both Gram-positive and Gram-negative bacteria. This is Ardiscretin from Tityus discrepans (Venezuelan scorpion).